The sequence spans 539 residues: Protoporphyrinogen oxidase (539 aa).

FAD-binding positions include Gly18–Gly23, Glu43–Ser44, Trp51, Gly70–Thr73, Val300, and Pro521–Val523.

Belongs to the protoporphyrinogen/coproporphyrinogen oxidase family. Protoporphyrinogen oxidase subfamily. FAD serves as cofactor.

It is found in the mitochondrion inner membrane. It carries out the reaction protoporphyrinogen IX + 3 O2 = protoporphyrin IX + 3 H2O2. It functions in the pathway porphyrin-containing compound metabolism; protoporphyrin-IX biosynthesis; protoporphyrin-IX from protoporphyrinogen-IX: step 1/1. In terms of biological role, catalyzes the 6-electron oxidation of protoporphyrinogen-IX to form protoporphyrin-IX. In Saccharomyces cerevisiae (strain ATCC 204508 / S288c) (Baker's yeast), this protein is Protoporphyrinogen oxidase.